The sequence spans 310 residues: Acetaldehyde dehydrogenase 1 (310 aa).

12–15 lines the NAD(+) pocket; that stretch reads SGNI. Cys-127 functions as the Acyl-thioester intermediate in the catalytic mechanism. Residues 163–171 and Asn-282 each bind NAD(+); that span reads SAGPGTRAN.

It belongs to the acetaldehyde dehydrogenase family.

The catalysed reaction is acetaldehyde + NAD(+) + CoA = acetyl-CoA + NADH + H(+). This chain is Acetaldehyde dehydrogenase 1, found in Mycobacterium sp. (strain KMS).